We begin with the raw amino-acid sequence, 318 residues long: N-acyl-aromatic-L-amino acid amidohydrolase (carboxylate-forming) (318 aa).

Positions 1–210 (MSSLPGSREP…ILDFIELFNQ (210 aa)) are hydrolytic domain. Histidine 21 and glutamate 24 together coordinate Zn(2+). Substrate contacts are provided by residues arginine 63 and 70 to 71 (NR). Histidine 116 is a binding site for Zn(2+). Substrate contacts are provided by glutamate 177 and tyrosine 287. The interval 211–318 (GMDLPAFEMD…RLTPRSTQTP (108 aa)) is shielding domain. Threonine 317 is subject to Phosphothreonine.

This sequence belongs to the AspA/AstE family. Aspartoacylase subfamily. As to quaternary structure, exists as a mixture of homodimers and homotetramer, both catalytically active. The cofactor is Zn(2+). In terms of tissue distribution, expressed predominantly in kidney and to a lesser extent in liver. Weakly expressed in heart, small intestine, brain, lung, testis, and stomach.

It localises to the apical cell membrane. It is found in the cytoplasm. The catalysed reaction is an N-acyl-aromatic L-alpha-amino acid + H2O = an aromatic L-alpha-amino acid + a carboxylate. The enzyme catalyses an N-acetyl-L-cysteine-S-conjugate + H2O = an S-substituted L-cysteine + acetate. Plays an important role in deacetylating mercapturic acids in kidney proximal tubules. Also acts on N-acetyl-aromatic amino acids. This Mus musculus (Mouse) protein is N-acyl-aromatic-L-amino acid amidohydrolase (carboxylate-forming) (Acy3).